The following is a 57-amino-acid chain: Potassium channel toxin alpha-KTx 4.2 (57 aa).

An N-terminal signal peptide occupies residues 1-20; sequence MKVLYGILIIFILCSMFYLS. Positions 21–22 are cleaved as a propeptide — removed by a carboxypeptidase; the sequence is QE. 3 disulfide bridges follow: cysteine 29-cysteine 50, cysteine 35-cysteine 55, and cysteine 39-cysteine 57.

The protein belongs to the short scorpion toxin superfamily. Potassium channel inhibitor family. Alpha-KTx 04 subfamily. As to expression, expressed by the venom gland.

The protein localises to the secreted. Blocker for small-conductance calcium-activated potassium channels KCa2.2/KCNN2 (Kd=80 nM) and KCa2.3/KCNN3 (Kd=197 nM) and ERG1/Kv11.1/KCNH2 potassium channels (53% inhibition at 5 uM). Has also been shown to inhibit Kv1.1/KCNA1 and Nav1.7/SCN9A with a moderate potency, as well as Kv11.1/KCNH2/ERG1 and Kv1.2/KCNA2 with a low potency. The polypeptide is Potassium channel toxin alpha-KTx 4.2 (Tityus serrulatus (Brazilian scorpion)).